The following is a 971-amino-acid chain: GEM-interacting protein (971 aa).

Ser19 carries the post-translational modification Phosphoserine. 3 disordered regions span residues Ala41 to Pro79, Leu231 to Lys267, and Asp383 to Gly476. Positions Pro44–Asp56 are enriched in basic and acidic residues. Positions Thr59–Ser69 are enriched in polar residues. Residues Ser75, Ser235, Ser238, Ser247, Ser436, and Ser440 each carry the phosphoserine modification. The F-BAR domain maps to Glu85–Arg348. The segment covering Ser458–Asp471 has biased composition (acidic residues). The segment at Thr492–Cys536 adopts a Phorbol-ester/DAG-type zinc-finger fold. Positions Leu553–Phe756 constitute a Rho-GAP domain. A Phosphothreonine modification is found at Thr659. The interval Ile799 to Ser865 is disordered. Over residues Pro805–Pro817 the composition is skewed to basic and acidic residues. 3 positions are modified to phosphoserine: Ser884, Ser908, and Ser924.

In terms of assembly, interacts with GEM through its N-terminal.

Stimulates, in vitro and in vivo, the GTPase activity of RhoA. The chain is GEM-interacting protein (Gmip) from Mus musculus (Mouse).